An 840-amino-acid polypeptide reads, in one-letter code: Recyclin-1 (840 aa).

One can recognise an F-box domain in the interval 1–48 (MDDLLKVPEIVTNIASYLSTVDYLSFQQVNKRVYAIINGKNDSKYWSL). The residue at position 409 (S409) is a Phosphoserine.

Interacts with SKP1.

Its subcellular location is the cytoplasm. It localises to the bud neck. It is found in the cell tip. In terms of biological role, involved in recycling plasma membrane proteins internalized by endocytosis. Required for recycling of the v-SNARE SNC1. The protein is Recyclin-1 (RCY1) of Saccharomyces cerevisiae (strain ATCC 204508 / S288c) (Baker's yeast).